Reading from the N-terminus, the 150-residue chain is UPF0756 membrane protein HD_1071 (150 aa).

Helical transmembrane passes span 1 to 21 (MSLQ…LGVL), 52 to 72 (YGLT…IVSG), 82 to 102 (ILSW…WLGG), and 114 to 134 (IITG…GIPV).

This sequence belongs to the UPF0756 family.

It is found in the cell membrane. The chain is UPF0756 membrane protein HD_1071 from Haemophilus ducreyi (strain 35000HP / ATCC 700724).